A 157-amino-acid polypeptide reads, in one-letter code: MGIISYLFDLAQDMALAAIPAVGFAMVFNVPQRALRWCALLGAIGHGSRMVMMSAGFNIEWATFLAALLVGSIGIQWSRWYLAHPKIFTVAAVIPMFPGISAYTAMISAVKISHFGYSEEMMIMLLSNFLKASSIVGALSIGLSIPGLWLYRKRPRV.

4 helical membrane-spanning segments follow: residues 10-30 (LAQD…VFNV), 55-75 (AGFN…SIGI), 87-107 (IFTV…TAMI), and 129-149 (FLKA…PGLW).

This sequence belongs to the ThrE exporter (TC 2.A.79) family. In terms of assembly, the transporter is composed of YjjB and YjjP.

Its subcellular location is the cell inner membrane. Its function is as follows. Involved in succinate export with YjjP. Both proteins are required for export. Participates in succinate export, but also in the export of other dicarboxylates, such as fumarate and malate. Contributes to succinate production under both aerobic and anaerobic conditions, and increases fumarate and malate production during anaerobic succinate production. The protein is Probable succinate transporter subunit YjjB of Klebsiella aerogenes (strain ATCC 13048 / DSM 30053 / CCUG 1429 / JCM 1235 / KCTC 2190 / NBRC 13534 / NCIMB 10102 / NCTC 10006 / CDC 819-56) (Enterobacter aerogenes).